A 316-amino-acid polypeptide reads, in one-letter code: Phosphatidylglycerol--prolipoprotein diacylglyceryl transferase (316 aa).

The next 3 helical transmembrane spans lie at 18–38, 47–67, and 95–115; these read PIPI…AIWL, GGNP…GIIG, and NGGL…AVFF. Position 141 (Arg-141) interacts with a 1,2-diacyl-sn-glycero-3-phospho-(1'-sn-glycerol). The next 2 membrane-spanning stretches (helical) occupy residues 188 to 208 and 251 to 271; these read VHPT…LLMW and INTI…FLLK. Positions 292 to 316 are disordered; sequence AVASPDGKPLPKAGEGIDGETPSTR.

This sequence belongs to the Lgt family.

It is found in the cell membrane. It catalyses the reaction L-cysteinyl-[prolipoprotein] + a 1,2-diacyl-sn-glycero-3-phospho-(1'-sn-glycerol) = an S-1,2-diacyl-sn-glyceryl-L-cysteinyl-[prolipoprotein] + sn-glycerol 1-phosphate + H(+). It participates in protein modification; lipoprotein biosynthesis (diacylglyceryl transfer). Functionally, catalyzes the transfer of the diacylglyceryl group from phosphatidylglycerol to the sulfhydryl group of the N-terminal cysteine of a prolipoprotein, the first step in the formation of mature lipoproteins. The chain is Phosphatidylglycerol--prolipoprotein diacylglyceryl transferase from Corynebacterium glutamicum (strain ATCC 13032 / DSM 20300 / JCM 1318 / BCRC 11384 / CCUG 27702 / LMG 3730 / NBRC 12168 / NCIMB 10025 / NRRL B-2784 / 534).